The following is a 1396-amino-acid chain: MFKEGSRDDAALAKEGLFDKLEIGIASDVTIRDKWSCGEIKKPETINYRTFKPEKGGLFCEKIFGPTKDWECYCGKYKKIKHKGIVCDRCGVEVTLSKVRRERMAHIELAVPIVHIWFFKTTPSRIGNVLGMTASDLERVIYYEEYVVIDPGNTDLVKKQLLNDAKYREVVEKWGKDAFVAKMGGEAVYDLLKSEDLESLLGELKDRLRKTKSQQARMKLAKRLKIVEGFVSSSNRPEWMVLKNIPVVPPDLRPLVPLDGGRFATSDLNDLYRRVINRNNRLKAILRLKTPEVIVRNEKRMLQEAVDALFDNGRHGHPVMGAGNRPLKSLSEMLKGKNGRFRQNLLGKRVDYSGRSVIIVGPELKFNQCGLPKEMALELFEPFIIKRLKDQGSVYTIRSAKKMIQRGAPEVWDVLEEIIKGHPVLLNRAPTLHRLGIQAFEPVLIEGKAIRVHPLVCAAFNADFDGDQMAVHVPLSIEAQLEAKVLMMAPDNIFLPSSGKPVATPSKDMTLGIYYLMADPTYFPEEHGGKTKVFKDEVEVLRALNAGGFILKDEICGSRRDETGRGIHIHEAIKVRIDGQIIETTPGRVFFNTIVPKELGFQNYSMPSKRISELILQCYKKVGLEATVRFLDDLKELGFVQSTKAAISMGLKDVRIPEIKKEILKDAYDKVAVVKKQYEDGIITDGERHSKTISIWTEVSDLLSNALYAEIKKQTNSKHNPLFLMIDSGARGNKSQLKQLGALRGLMAKPNGAIIESPITSNFREGLTVLEYSISSHGARKGLADTALKTADSGYLTRRLVDVAQDVIITEKDCGTLNHIEVSTIRQGSEELLPLKDRIYGRTVSENVYQPGDKSNVLAYAGDVLTSSQAEAIDDAGIDSVKIRSTLTCESRRGVCAKCYGLNLANGRLIGLGEAVGIIAAQSIGEPGTQLTMRTFHLGGIAATSSTPEIVAECDGILVYLDLRFVVDQEGNNLVLNKMGALHLVRDEGRSLSEYKKLLSTKSIESLATFPVELGAKILVDDGAAVTAGQRIAEVELHNIPIICDKPGFVHYEDLVEGVSTEKVTNKNTGLVELIVKQHRGELHPQIAIYADANMQELVGTYAIPSGAIISVEEGQRIAPGMLLARLPRGAIKTKDITGGLPRVAELVEARKPEDAADIAKIDGVVDFKGIQKNKRILVVRDEVTGMEEEHLISLTKHLIVQRGDSVIKGQQLTDGLVVPHEILEICGVRELQKYLVNEVQEVYRLQGVDINDKHIEIIVRQMLQKVRITDPGDTTLLFGEDVDKKEFYEENRRTEEDGGKPAQAVPVLLGITKASLGTESFISAASFQDTTRVLTDAACSSKTDYLLGFKENVIMGHMIPGGTGFDTHKRIKQHLEKEQEDLVFDFDSEFESVAG.

Cys72, Cys74, Cys87, and Cys90 together coordinate Zn(2+). Mg(2+) is bound by residues Asp463, Asp465, and Asp467. Cys814, Cys889, Cys896, and Cys899 together coordinate Zn(2+).

It belongs to the RNA polymerase beta' chain family. In terms of assembly, the RNAP catalytic core consists of 2 alpha, 1 beta, 1 beta' and 1 omega subunit. When a sigma factor is associated with the core the holoenzyme is formed, which can initiate transcription. Mg(2+) serves as cofactor. The cofactor is Zn(2+).

It carries out the reaction RNA(n) + a ribonucleoside 5'-triphosphate = RNA(n+1) + diphosphate. DNA-dependent RNA polymerase catalyzes the transcription of DNA into RNA using the four ribonucleoside triphosphates as substrates. In Chlamydia muridarum (strain MoPn / Nigg), this protein is DNA-directed RNA polymerase subunit beta'.